The primary structure comprises 149 residues: Arginine repressor (149 aa).

Belongs to the ArgR family. Homohexamer.

It is found in the cytoplasm. It functions in the pathway amino-acid biosynthesis; L-arginine biosynthesis [regulation]. In terms of biological role, regulates arginine biosynthesis genes. The protein is Arginine repressor (argR) of Geobacillus stearothermophilus (Bacillus stearothermophilus).